Consider the following 478-residue polypeptide: Transposase for insertion sequence element IS231C (478 aa).

This sequence belongs to the transposase 11 family.

Functionally, involved in the transposition of the insertion sequence. In Bacillus thuringiensis subsp. berliner, this protein is Transposase for insertion sequence element IS231C.